Consider the following 570-residue polypeptide: Urease subunit alpha (570 aa).

One can recognise a Urease domain in the interval 131 to 570 (GGFDSHIHFI…LPLAQRYFMF (440 aa)). Ni(2+)-binding residues include His-136, His-138, and Lys-219. Lys-219 bears the N6-carboxylysine mark. His-221 is a substrate binding site. Residues His-248 and His-274 each contribute to the Ni(2+) site. The active-site Proton donor is His-322. Ni(2+) is bound at residue Asp-362.

The protein belongs to the metallo-dependent hydrolases superfamily. Urease alpha subunit family. Heterotrimer of UreA (gamma), UreB (beta) and UreC (alpha) subunits. Three heterotrimers associate to form the active enzyme. It depends on Ni cation as a cofactor. Post-translationally, carboxylation allows a single lysine to coordinate two nickel ions.

The protein localises to the cytoplasm. It catalyses the reaction urea + 2 H2O + H(+) = hydrogencarbonate + 2 NH4(+). Its pathway is nitrogen metabolism; urea degradation; CO(2) and NH(3) from urea (urease route): step 1/1. This Rhodopseudomonas palustris (strain ATCC BAA-98 / CGA009) protein is Urease subunit alpha.